The sequence spans 639 residues: MARIDSAVSSSQVYADGESSSARYTRTLSGARSALFTLLIAIALVFTVEVIVRWSWPDTVAYFADPMRPAWTTVAVFFLAMLGVDALFGREHKAALLIAPLAVVPAFISQQKQVFLSDPLYPTDFLFGRQIMELMPVLVKDRPWTAVGVVAGLIAAIVVGALLLRFAWQNFPKLTRRERLMRIAFALPLLVAFWNIMDYNQFSWIRDRLRVIPIMWDQTENYRHNGFALAFAINLPMANVNAPAGYMADAIDRIPVKPLPAGTTHRGKPDVIVLMSESFWDPTRLPKVKLTPDPMPTIRELQGGNVFSPEFGGMTANVEFEALTGFSNAFLPYGSIPYQQYIRNPIPSLATFFRGEGYVSRAIHPFQGWFWNRTAVYKAFGFDMFRSEENMPAMQKRGIFASDESLTKEIIRQADEVEDPFFFFAVTLQGHGPYEANRYAKNTIKVEGDLPEADRQVLATYAQGVKEADDSLKMLMDWAKERDRETIIVLFGDHLPPLNTVYSSTGYMKGITAERKGPKDQMKAEHETPLVVWSNKTGPKKNIGTISPAFLSYQILKQAGYEHPYYTGFLGKVYDHYRVLDRYMLIRKNGKDVADWLRQPKVPASLRDYRFLQHDMMFGKRYSTERFFKSHAELYSAGL.

A run of 6 helical transmembrane segments spans residues 34 to 54 (ALFT…IVRW), 69 to 89 (PAWT…ALFG), 96 to 116 (LLIA…QVFL), 144 to 164 (WTAV…ALLL), 185 to 205 (FALP…FSWI), and 227 to 247 (FALA…AGYM).

The protein localises to the cell membrane. This Rhizobium meliloti (strain 1021) (Ensifer meliloti) protein is Putative cyclic beta-1,2-glucan modification protein (cgmA).